The chain runs to 184 residues: Tumor necrosis factor receptor superfamily member 13C (184 aa).

Topologically, residues 1–78 (MRRGPRSLRG…EAALPLPGLL (78 aa)) are extracellular. The stretch at 18 to 35 (PCVPAECFDLLVRHCVAC) is one TNFR-Cys; truncated repeat. Intrachain disulfides connect Cys19/Cys32 and Cys24/Cys35. Positions 26–31 (DLLVRH) are essential for TNFSF13B/TALL1/BAFF/BLyS binding. Residues 43-62 (PKPAGASSPAPRTALQPQES) form a disordered region. Residues 79–99 (FGAPALLGLALVLALVLVGLV) form a helical; Signal-anchor for type III membrane protein membrane-spanning segment. The Cytoplasmic portion of the chain corresponds to 100-184 (SWRRRQRRLR…TTKTAGPEQQ (85 aa)). Residues 107 to 184 (RLRGASSAEA…TTKTAGPEQQ (78 aa)) are disordered. Residues 118–128 (DGDKDAPEPLD) are compositionally biased toward basic and acidic residues. Residues 168-184 (LGSTELVTTKTAGPEQQ) show a composition bias toward polar residues.

In terms of tissue distribution, highly expressed in spleen and lymph node, and in resting B-cells. Detected at lower levels in activated B-cells, resting CD4+ T-cells, in thymus and peripheral blood leukocytes.

It is found in the membrane. Its function is as follows. B-cell receptor specific for TNFSF13B/TALL1/BAFF/BLyS. Promotes the survival of mature B-cells and the B-cell response. This chain is Tumor necrosis factor receptor superfamily member 13C (TNFRSF13C), found in Homo sapiens (Human).